The sequence spans 433 residues: uncharacterized protein (433 aa).

The stretch at 258 to 304 forms a coiled coil; that stretch reads KNIKSKLLLELRQLKNNITNLQNKITKTMDNVKKIIEEIEQSKNKVT.

The protein belongs to the mimivirus R160 family.

The protein resides in the virion. This is an uncharacterized protein from Acanthamoeba polyphaga mimivirus (APMV).